A 284-amino-acid chain; its full sequence is 4-diphosphocytidyl-2-C-methyl-D-erythritol kinase (284 aa).

The active site involves Lys13. 96–106 (PMGGGLGGGSS) provides a ligand contact to ATP. Asp138 is an active-site residue.

Belongs to the GHMP kinase family. IspE subfamily.

It catalyses the reaction 4-CDP-2-C-methyl-D-erythritol + ATP = 4-CDP-2-C-methyl-D-erythritol 2-phosphate + ADP + H(+). The protein operates within isoprenoid biosynthesis; isopentenyl diphosphate biosynthesis via DXP pathway; isopentenyl diphosphate from 1-deoxy-D-xylulose 5-phosphate: step 3/6. In terms of biological role, catalyzes the phosphorylation of the position 2 hydroxy group of 4-diphosphocytidyl-2C-methyl-D-erythritol. This Chromobacterium violaceum (strain ATCC 12472 / DSM 30191 / JCM 1249 / CCUG 213 / NBRC 12614 / NCIMB 9131 / NCTC 9757 / MK) protein is 4-diphosphocytidyl-2-C-methyl-D-erythritol kinase.